A 196-amino-acid polypeptide reads, in one-letter code: Holliday junction branch migration complex subunit RuvA (196 aa).

Residues 1–63 (MINKIYGKVI…ENELKLFGFL (63 aa)) are domain I. The domain II stretch occupies residues 64–139 (NSDERETFKS…KLLINNELES (76 aa)). Position 139 (serine 139) is a region of interest, flexible linker. Residues 139–196 (SSLFRFKELEESIVSMGFDRKIVNSKLKEAFNLVEFSNLKDSEKEQFLFKEVLKRMSN) are domain III.

Belongs to the RuvA family. In terms of assembly, homotetramer. Forms an RuvA(8)-RuvB(12)-Holliday junction (HJ) complex. HJ DNA is sandwiched between 2 RuvA tetramers; dsDNA enters through RuvA and exits via RuvB. An RuvB hexamer assembles on each DNA strand where it exits the tetramer. Each RuvB hexamer is contacted by two RuvA subunits (via domain III) on 2 adjacent RuvB subunits; this complex drives branch migration. In the full resolvosome a probable DNA-RuvA(4)-RuvB(12)-RuvC(2) complex forms which resolves the HJ.

It localises to the cytoplasm. The RuvA-RuvB-RuvC complex processes Holliday junction (HJ) DNA during genetic recombination and DNA repair, while the RuvA-RuvB complex plays an important role in the rescue of blocked DNA replication forks via replication fork reversal (RFR). RuvA specifically binds to HJ cruciform DNA, conferring on it an open structure. The RuvB hexamer acts as an ATP-dependent pump, pulling dsDNA into and through the RuvAB complex. HJ branch migration allows RuvC to scan DNA until it finds its consensus sequence, where it cleaves and resolves the cruciform DNA. The polypeptide is Holliday junction branch migration complex subunit RuvA (Borreliella afzelii (strain PKo) (Borrelia afzelii)).